The following is a 479-amino-acid chain: Aspartyl/glutamyl-tRNA(Asn/Gln) amidotransferase subunit B (479 aa).

Belongs to the GatB/GatE family. GatB subfamily. Heterotrimer of A, B and C subunits.

It catalyses the reaction L-glutamyl-tRNA(Gln) + L-glutamine + ATP + H2O = L-glutaminyl-tRNA(Gln) + L-glutamate + ADP + phosphate + H(+). It carries out the reaction L-aspartyl-tRNA(Asn) + L-glutamine + ATP + H2O = L-asparaginyl-tRNA(Asn) + L-glutamate + ADP + phosphate + 2 H(+). Allows the formation of correctly charged Asn-tRNA(Asn) or Gln-tRNA(Gln) through the transamidation of misacylated Asp-tRNA(Asn) or Glu-tRNA(Gln) in organisms which lack either or both of asparaginyl-tRNA or glutaminyl-tRNA synthetases. The reaction takes place in the presence of glutamine and ATP through an activated phospho-Asp-tRNA(Asn) or phospho-Glu-tRNA(Gln). This is Aspartyl/glutamyl-tRNA(Asn/Gln) amidotransferase subunit B from Geotalea daltonii (strain DSM 22248 / JCM 15807 / FRC-32) (Geobacter daltonii).